A 764-amino-acid polypeptide reads, in one-letter code: G-type lectin S-receptor-like serine/threonine-protein kinase SD3-1 (764 aa).

An N-terminal signal peptide occupies residues 1–24 (MKMLRALLLCLSLVFFLAFQIVVS). Bulb-type lectin domains lie at 25–151 (EIQL…QSFG) and 154–279 (TDTL…WKPV). Topologically, residues 25 to 442 (EIQLGSKLVV…TKSHSICIPC (418 aa)) are extracellular. N-linked (GlcNAc...) asparagine glycans are attached at residues Asn92, Asn198, and Asn248. The EGF-like; atypical domain occupies 283–320 (VENQCRVFATCGSQVCSFNSSGYTECNCPFNAFVSVSD). Cystine bridges form between Cys287–Cys298, Cys293–Cys308, Cys332–Cys413, Cys365–Cys388, and Cys369–Cys375. 2 N-linked (GlcNAc...) asparagine glycosylation sites follow: Asn301 and Asn353. Residues 332–413 (CKSGFNMVKF…LSSISYVKTC (82 aa)) form the Apple domain. N-linked (GlcNAc...) asparagine glycosylation is present at Asn423. The helical transmembrane segment at 443 to 463 (LVGATSTTLVLFLGFQLGIVV) threads the bilayer. Over 464-764 (YIYRRKKKLA…SESSQSLYEP (301 aa)) the chain is Cytoplasmic. A Protein kinase domain is found at 466-764 (YRRKKKLAKK…SESSQSLYEP (299 aa)). ATP is bound by residues 508–516 (IGPQIFKGV) and Lys526. Residues 586 to 603 (LRSKKLTWRIRTDTCLSV) are caM-binding. Residues 738-764 (DPPPPPFACARSSPTNSSESSQSLYEP) form a disordered region. A compositionally biased stretch (low complexity) spans 749 to 764 (SSPTNSSESSQSLYEP).

Its subcellular location is the cell membrane. The enzyme catalyses L-seryl-[protein] + ATP = O-phospho-L-seryl-[protein] + ADP + H(+). The catalysed reaction is L-threonyl-[protein] + ATP = O-phospho-L-threonyl-[protein] + ADP + H(+). This Arabidopsis thaliana (Mouse-ear cress) protein is G-type lectin S-receptor-like serine/threonine-protein kinase SD3-1 (SD31).